A 96-amino-acid polypeptide reads, in one-letter code: Nucleoid-associated protein TC_0612 (96 aa).

It belongs to the YbaB/EbfC family. As to quaternary structure, homodimer.

It localises to the cytoplasm. The protein localises to the nucleoid. Functionally, binds to DNA and alters its conformation. May be involved in regulation of gene expression, nucleoid organization and DNA protection. This chain is Nucleoid-associated protein TC_0612, found in Chlamydia muridarum (strain MoPn / Nigg).